We begin with the raw amino-acid sequence, 846 residues long: Protein arginine N-methyltransferase 9 (846 aa).

TPR repeat units follow at residues 25 to 58 (VARS…APEL), 67 to 100 (QYTL…FPDD), and 101 to 134 (EVIC…NPDF). 2 consecutive SAM-dependent MTase PRMT-type domains span residues 137-466 (AKEN…YLRI) and 530-846 (NIPY…AVKP).

Belongs to the class I-like SAM-binding methyltransferase superfamily. Protein arginine N-methyltransferase family. In terms of assembly, found in a complex with PRMT9, SF3B2 and SF3B4. Interacts with SF3B2.

Its subcellular location is the cytoplasm. It catalyses the reaction L-arginyl-[protein] + 2 S-adenosyl-L-methionine = N(omega),N(omega)'-dimethyl-L-arginyl-[protein] + 2 S-adenosyl-L-homocysteine + 2 H(+). Its function is as follows. Arginine methyltransferase that can both catalyze the formation of omega-N monomethylarginine (MMA) and symmetrical dimethylarginine (sDMA). Specifically mediates the symmetrical dimethylation of SF3B2. Involved in the regulation of alternative splicing of pre-mRNA. This chain is Protein arginine N-methyltransferase 9 (Prmt9), found in Mus musculus (Mouse).